Reading from the N-terminus, the 246-residue chain is Probable transcriptional regulatory protein SPO1072 (246 aa).

Positions 1-22 (MAGHSKWANIQHRKGRQDAARS) are disordered.

It belongs to the TACO1 family.

The protein resides in the cytoplasm. The protein is Probable transcriptional regulatory protein SPO1072 of Ruegeria pomeroyi (strain ATCC 700808 / DSM 15171 / DSS-3) (Silicibacter pomeroyi).